The primary structure comprises 1168 residues: Myosin IC heavy chain (1168 aa).

In terms of domain architecture, Myosin motor spans 7-666 (HGVDDMVMLT…SVFSLEELRD (660 aa)). Residue 101–108 (GESGAGKT) participates in ATP binding. S311 is subject to Phosphoserine. The segment at 542 to 564 (INILVATLSKCTPHYIRCIKPNE) is actin-binding. The 189-residue stretch at 704-892 (KERRRLSLER…KVSVAPGLPP (189 aa)) folds into the TH1 domain. Disordered stretches follow at residues 876–909 (DGKV…GGAS), 921–978 (ILGA…APGP), and 1036–1168 (AAAP…PPGM). The span at 895–909 (APNIQAPQETSGGAS) shows a compositional bias: polar residues. Gly residues-rich tracts occupy residues 924–939 (AKGG…GGPS) and 950–959 (PGGGGGGPSP). The span at 960–978 (FGGRPSPSGPPAAASAPGP) shows a compositional bias: low complexity. One can recognise an SH3 domain in the interval 976–1035 (PGPEQARALYDFAAENPDELTFNEGAVVTVINKSNPDWWEGELNGQRGVFPASYVELIPR). Residues 1040–1052 (APGPSGGPRPAPP) show a composition bias toward pro residues. Gly residues-rich tracts occupy residues 1063–1083 (GGPG…GRGG) and 1090–1099 (GRAGPPGGRG). Over residues 1100-1112 (MPAPGGAAPRGRG) the composition is skewed to low complexity. Positions 1120–1141 (GPPGGGRGGAPPPGGMRGRGGP) are enriched in gly residues. The segment covering 1152–1161 (GGMMPPRGRA) has biased composition (low complexity).

The protein belongs to the TRAFAC class myosin-kinesin ATPase superfamily. Myosin family. In terms of assembly, myosin I heavy chain is single-headed. Dimer of a heavy and a light chain. Inability to self-assemble into filaments.

In terms of biological role, myosin is a protein that binds to F-actin and has ATPase activity that is activated by F-actin. The chain is Myosin IC heavy chain (MIC) from Acanthamoeba castellanii (Amoeba).